Reading from the N-terminus, the 474-residue chain is Recombinase Flp protein (474 aa).

The 287-residue stretch at leucine 135–lysine 421 folds into the Tyr recombinase Flp-type domain. Tyrosine 342 (O-(3'-phospho-DNA)-tyrosine intermediate) is an active-site residue. Positions alanine 426–glutamate 474 are disordered. 2 stretches are compositionally biased toward polar residues: residues asparagine 429–serine 439 and threonine 446–leucine 468.

It belongs to the 'phage' integrase family.

Functionally, catalyzes the recombination between the large inverted repetitions of the plasmid. The polypeptide is Recombinase Flp protein (Zygosaccharomyces bailii).